A 364-amino-acid chain; its full sequence is tRNA 2-selenouridine synthase (364 aa).

The Rhodanese domain maps to 14–137; that stretch reads LIADTPIIDV…LRQAAIQATI (124 aa). Cys-97 functions as the S-selanylcysteine intermediate in the catalytic mechanism.

Belongs to the SelU family. In terms of assembly, monomer.

The catalysed reaction is 5-methylaminomethyl-2-thiouridine(34) in tRNA + selenophosphate + (2E)-geranyl diphosphate + H2O + H(+) = 5-methylaminomethyl-2-selenouridine(34) in tRNA + (2E)-thiogeraniol + phosphate + diphosphate. It catalyses the reaction 5-methylaminomethyl-2-thiouridine(34) in tRNA + (2E)-geranyl diphosphate = 5-methylaminomethyl-S-(2E)-geranyl-thiouridine(34) in tRNA + diphosphate. The enzyme catalyses 5-methylaminomethyl-S-(2E)-geranyl-thiouridine(34) in tRNA + selenophosphate + H(+) = 5-methylaminomethyl-2-(Se-phospho)selenouridine(34) in tRNA + (2E)-thiogeraniol. It carries out the reaction 5-methylaminomethyl-2-(Se-phospho)selenouridine(34) in tRNA + H2O = 5-methylaminomethyl-2-selenouridine(34) in tRNA + phosphate. Its function is as follows. Involved in the post-transcriptional modification of the uridine at the wobble position (U34) of tRNA(Lys), tRNA(Glu) and tRNA(Gln). Catalyzes the conversion of 2-thiouridine (S2U-RNA) to 2-selenouridine (Se2U-RNA). Acts in a two-step process involving geranylation of 2-thiouridine (S2U) to S-geranyl-2-thiouridine (geS2U) and subsequent selenation of the latter derivative to 2-selenouridine (Se2U) in the tRNA chain. The polypeptide is tRNA 2-selenouridine synthase (Shigella sonnei (strain Ss046)).